Consider the following 162-residue polypeptide: Large ribosomal subunit protein uL15 (162 aa).

The segment at 1–41 is disordered; it reads MKLSDIADNAGSRKKRMRVGRGIGSGKGKTAGRGGKGQTAR. The span at 21 to 37 shows a compositional bias: gly residues; the sequence is RGIGSGKGKTAGRGGKG.

This sequence belongs to the universal ribosomal protein uL15 family. As to quaternary structure, part of the 50S ribosomal subunit.

In terms of biological role, binds to the 23S rRNA. This is Large ribosomal subunit protein uL15 from Rhodopseudomonas palustris (strain BisB18).